A 248-amino-acid polypeptide reads, in one-letter code: 2,3-bisphosphoglycerate-dependent phosphoglycerate mutase (248 aa).

Substrate contacts are provided by residues R8–N15, T21–G22, R60, E87–Y90, K98, and R114–R115. H9 (tele-phosphohistidine intermediate) is an active-site residue. Catalysis depends on E87, which acts as the Proton donor/acceptor. The tract at residues Y117–R137 is disordered. Positions T127–R137 are enriched in basic and acidic residues. G183–N184 serves as a coordination point for substrate.

The protein belongs to the phosphoglycerate mutase family. BPG-dependent PGAM subfamily. Homodimer.

It carries out the reaction (2R)-2-phosphoglycerate = (2R)-3-phosphoglycerate. It participates in carbohydrate degradation; glycolysis; pyruvate from D-glyceraldehyde 3-phosphate: step 3/5. Functionally, catalyzes the interconversion of 2-phosphoglycerate and 3-phosphoglycerate. This is 2,3-bisphosphoglycerate-dependent phosphoglycerate mutase from Cupriavidus taiwanensis (strain DSM 17343 / BCRC 17206 / CCUG 44338 / CIP 107171 / LMG 19424 / R1) (Ralstonia taiwanensis (strain LMG 19424)).